A 379-amino-acid polypeptide reads, in one-letter code: DNA replication and repair protein RecF (379 aa).

Position 30-37 (30-37 (GKNAQGKT)) interacts with ATP.

The protein belongs to the RecF family.

It localises to the cytoplasm. Its function is as follows. The RecF protein is involved in DNA metabolism; it is required for DNA replication and normal SOS inducibility. RecF binds preferentially to single-stranded, linear DNA. It also seems to bind ATP. The chain is DNA replication and repair protein RecF from Ligilactobacillus salivarius (strain UCC118) (Lactobacillus salivarius).